The chain runs to 318 residues: Formimidoylglutamase (318 aa).

The Mn(2+) site is built by His124, Asp153, His155, Asp157, Cys241, and Asp243.

The protein belongs to the arginase family. Mn(2+) serves as cofactor.

The enzyme catalyses N-formimidoyl-L-glutamate + H2O = formamide + L-glutamate. It participates in amino-acid degradation; L-histidine degradation into L-glutamate; L-glutamate from N-formimidoyl-L-glutamate (hydrolase route): step 1/1. Functionally, catalyzes the conversion of N-formimidoyl-L-glutamate to L-glutamate and formamide. The protein is Formimidoylglutamase of Fusobacterium nucleatum subsp. nucleatum (strain ATCC 25586 / DSM 15643 / BCRC 10681 / CIP 101130 / JCM 8532 / KCTC 2640 / LMG 13131 / VPI 4355).